The primary structure comprises 199 residues: Peroxiredoxin-1 (199 aa).

Ser-2 is modified (N-acetylserine). Positions 6 to 165 (AKIGHRAPQF…TLRLVQAFQF (160 aa)) constitute a Thioredoxin domain. Lys-7 carries the N6-acetyllysine; alternate modification. Residue Lys-7 forms a Glycyl lysine isopeptide (Lys-Gly) (interchain with G-Cter in SUMO2); alternate linkage. N6-acetyllysine occurs at positions 16 and 27. The residue at position 35 (Lys-35) is an N6-acetyllysine; alternate. Lys-35 is subject to N6-succinyllysine; alternate. Catalysis depends on Cys-52, which acts as the Cysteine sulfenic acid (-SOH) intermediate. Thr-90 carries the phosphothreonine modification. A Glycyl lysine isopeptide (Lys-Gly) (interchain with G-Cter in SUMO2) cross-link involves residue Lys-120. Lys-136 carries the post-translational modification N6-acetyllysine. Residues 176-199 (GWKPGSDTIKPDVQKSKEYFSKQK) are disordered. Basic and acidic residues predominate over residues 184–199 (IKPDVQKSKEYFSKQK). Residue Lys-185 forms a Glycyl lysine isopeptide (Lys-Gly) (interchain with G-Cter in SUMO1) linkage. An N6-acetyllysine modification is found at Lys-197.

Belongs to the peroxiredoxin family. AhpC/Prx1 subfamily. In terms of assembly, homodimer; disulfide-linked, upon oxidation. 5 homodimers assemble to form a ring-like decamer. Interacts with GDPD5; forms a mixed-disulfide with GDPD5. Interacts with SESN1 and SESN2. Interacts with FAM107A. Post-translationally, phosphorylated on Thr-90 during the M-phase, which leads to a decrease in enzymatic activity. Acetylation increases reducing activity and resistance to superoxidation. Deacetylated by HDAC6 which decreases reducing activity.

It localises to the cytoplasm. The catalysed reaction is a hydroperoxide + [thioredoxin]-dithiol = an alcohol + [thioredoxin]-disulfide + H2O. In terms of biological role, thiol-specific peroxidase that catalyzes the reduction of hydrogen peroxide and organic hydroperoxides to water and alcohols, respectively. Plays a role in cell protection against oxidative stress by detoxifying peroxides and as sensor of hydrogen peroxide-mediated signaling events. Might participate in the signaling cascades of growth factors and tumor necrosis factor-alpha by regulating the intracellular concentrations of H(2)O(2). Reduces an intramolecular disulfide bond in GDPD5 that gates the ability to GDPD5 to drive postmitotic motor neuron differentiation. This chain is Peroxiredoxin-1 (PRDX1), found in Bos taurus (Bovine).